The sequence spans 201 residues: Dephospho-CoA kinase (201 aa).

The 198-residue stretch at 4 to 201 (SVGLTGNIAS…KYLREAKIKQ (198 aa)) folds into the DPCK domain. 12–17 (ASGKST) lines the ATP pocket.

This sequence belongs to the CoaE family.

Its subcellular location is the cytoplasm. It carries out the reaction 3'-dephospho-CoA + ATP = ADP + CoA + H(+). It functions in the pathway cofactor biosynthesis; coenzyme A biosynthesis; CoA from (R)-pantothenate: step 5/5. Catalyzes the phosphorylation of the 3'-hydroxyl group of dephosphocoenzyme A to form coenzyme A. The protein is Dephospho-CoA kinase of Legionella pneumophila subsp. pneumophila (strain Philadelphia 1 / ATCC 33152 / DSM 7513).